A 360-amino-acid chain; its full sequence is Phosphoserine aminotransferase (360 aa).

Residue Arg-41 participates in L-glutamate binding. Pyridoxal 5'-phosphate-binding positions include 75–76 (AS), Trp-99, Thr-152, Asp-171, and Gln-194. The residue at position 195 (Lys-195) is an N6-(pyridoxal phosphate)lysine. 236-237 (NT) contributes to the pyridoxal 5'-phosphate binding site.

The protein belongs to the class-V pyridoxal-phosphate-dependent aminotransferase family. SerC subfamily. In terms of assembly, homodimer. The cofactor is pyridoxal 5'-phosphate.

It localises to the cytoplasm. The enzyme catalyses O-phospho-L-serine + 2-oxoglutarate = 3-phosphooxypyruvate + L-glutamate. It catalyses the reaction 4-(phosphooxy)-L-threonine + 2-oxoglutarate = (R)-3-hydroxy-2-oxo-4-phosphooxybutanoate + L-glutamate. It functions in the pathway amino-acid biosynthesis; L-serine biosynthesis; L-serine from 3-phospho-D-glycerate: step 2/3. Its pathway is cofactor biosynthesis; pyridoxine 5'-phosphate biosynthesis; pyridoxine 5'-phosphate from D-erythrose 4-phosphate: step 3/5. Functionally, catalyzes the reversible conversion of 3-phosphohydroxypyruvate to phosphoserine and of 3-hydroxy-2-oxo-4-phosphonooxybutanoate to phosphohydroxythreonine. The chain is Phosphoserine aminotransferase from Porphyromonas gingivalis (strain ATCC 33277 / DSM 20709 / CIP 103683 / JCM 12257 / NCTC 11834 / 2561).